Here is a 254-residue protein sequence, read N- to C-terminus: Phosphonates import ATP-binding protein PhnC (254 aa).

Positions 2–246 constitute an ABC transporter domain; that stretch reads IQLKNVSKIY…VFDDIYNGGN (245 aa). 35 to 42 provides a ligand contact to ATP; it reads GLSGAGKS.

It belongs to the ABC transporter superfamily. Phosphonates importer (TC 3.A.1.9.1) family. As to quaternary structure, the complex is composed of two ATP-binding proteins (PhnC), two transmembrane proteins (PhnE) and a solute-binding protein (PhnD).

It localises to the cell membrane. The catalysed reaction is phosphonate(out) + ATP + H2O = phosphonate(in) + ADP + phosphate + H(+). Functionally, part of the ABC transporter complex PhnCDE involved in phosphonates import. Responsible for energy coupling to the transport system. This chain is Phosphonates import ATP-binding protein PhnC, found in Lactobacillus johnsonii (strain CNCM I-12250 / La1 / NCC 533).